The primary structure comprises 226 residues: Hand transcription factor 1 (226 aa).

A compositionally biased stretch (polar residues) spans 1–15 (MVKSTTAGNNAVSSL). The segment at 1 to 35 (MVKSTTAGNNAVSSLESTDSKKSRKEKSREKEHRR) is disordered. The basic motif stretch occupies residues 23–36 (SRKEKSREKEHRRA). The 55-residue stretch at 23-77 (SRKEKSREKEHRRAQCINSAFEILQQHIPYLKSEERKSLPKIKTLRLAMQYIDHL) folds into the bHLH domain. The helix-loop-helix motif stretch occupies residues 37–77 (QCINSAFEILQQHIPYLKSEERKSLPKIKTLRLAMQYIDHL).

Its subcellular location is the nucleus. Functionally, probable transcription factor which regulates early embryonic myogenesis, in cooperation with transcription factors unc-120 and hlh-1. Involved in controlling the number and position of somatic gonadal precursor cells (SGPs) in the gonadal primordium, and embryonic body shape. The protein is Hand transcription factor 1 of Caenorhabditis elegans.